The primary structure comprises 653 residues: Mediator of RNA polymerase II transcription subunit 17 (653 aa).

The segment at 246–271 (SNESDEHIDSTTGHDIPGTSEKLSAS) is disordered.

This sequence belongs to the Mediator complex subunit 17 family. In terms of assembly, component of the Mediator complex.

The protein localises to the nucleus. Component of the Mediator complex, a coactivator involved in the regulated transcription of nearly all RNA polymerase II-dependent genes. Mediator functions as a bridge to convey information from gene-specific regulatory proteins to the basal RNA polymerase II transcription machinery. The Mediator complex, having a compact conformation in its free form, is recruited to promoters by direct interactions with regulatory proteins and serves for the assembly of a functional preinitiation complex with RNA polymerase II and the general transcription factors. The chain is Mediator of RNA polymerase II transcription subunit 17 (MED17) from Arabidopsis thaliana (Mouse-ear cress).